Consider the following 168-residue polypeptide: Plastocyanin A, chloroplastic (168 aa).

Residues 1–69 constitute a chloroplast transit peptide; it reads MATVTSAAVS…SAMIASNAMA (69 aa). The Plastocyanin-like domain occupies 70–168; that stretch reads IDVLLGADDG…AGMVGKVTVN (99 aa). Positions 106, 153, 156, and 161 each coordinate Cu cation.

The protein belongs to the plastocyanin family. Cu(2+) serves as cofactor.

The protein resides in the plastid. The protein localises to the chloroplast thylakoid membrane. Participates in electron transfer between P700 and the cytochrome b6-f complex in photosystem I. This is Plastocyanin A, chloroplastic (PETE) from Populus nigra (Lombardy poplar).